A 174-amino-acid chain; its full sequence is Crossover junction endodeoxyribonuclease RuvC (174 aa).

Catalysis depends on residues Asp8, Glu67, and Asp139. Residues Asp8, Glu67, and Asp139 each contribute to the Mg(2+) site.

It belongs to the RuvC family. Homodimer which binds Holliday junction (HJ) DNA. The HJ becomes 2-fold symmetrical on binding to RuvC with unstacked arms; it has a different conformation from HJ DNA in complex with RuvA. In the full resolvosome a probable DNA-RuvA(4)-RuvB(12)-RuvC(2) complex forms which resolves the HJ. Requires Mg(2+) as cofactor.

The protein resides in the cytoplasm. The enzyme catalyses Endonucleolytic cleavage at a junction such as a reciprocal single-stranded crossover between two homologous DNA duplexes (Holliday junction).. Functionally, the RuvA-RuvB-RuvC complex processes Holliday junction (HJ) DNA during genetic recombination and DNA repair. Endonuclease that resolves HJ intermediates. Cleaves cruciform DNA by making single-stranded nicks across the HJ at symmetrical positions within the homologous arms, yielding a 5'-phosphate and a 3'-hydroxyl group; requires a central core of homology in the junction. The consensus cleavage sequence is 5'-(A/T)TT(C/G)-3'. Cleavage occurs on the 3'-side of the TT dinucleotide at the point of strand exchange. HJ branch migration catalyzed by RuvA-RuvB allows RuvC to scan DNA until it finds its consensus sequence, where it cleaves and resolves the cruciform DNA. The protein is Crossover junction endodeoxyribonuclease RuvC of Pseudomonas aeruginosa (strain LESB58).